Here is a 272-residue protein sequence, read N- to C-terminus: Granaticin polyketide synthase putative ketoacyl reductase 1 (272 aa).

Residue 21 to 45 (LVTGATSGIGLAIARRLAALGARTF) participates in NAD(+) binding. Residue S155 coordinates substrate. Y168 acts as the Proton acceptor in catalysis.

Belongs to the short-chain dehydrogenases/reductases (SDR) family.

The protein operates within antibiotic biosynthesis; granaticin biosynthesis. The polypeptide is Granaticin polyketide synthase putative ketoacyl reductase 1 (gra-orf5) (Streptomyces violaceoruber).